Consider the following 571-residue polypeptide: Potassium-transporting ATPase potassium-binding subunit (571 aa).

The next 12 helical transmembrane spans lie at 5–25 (LAAG…YVPV), 60–80 (YGYA…LYAL), 86–106 (VLPL…NTAV), 131–151 (GLAV…VALI), 177–197 (ILLP…VIQS), 247–267 (PTPV…VSLT), 291–311 (LTLL…TLAA), 334–354 (FGIP…TGAV), 386–406 (GLYG…LLVG), 425–445 (ALSV…TVIL), 498–518 (ALGL…LALA), and 547–567 (GTVV…GPIA).

Belongs to the KdpA family. In terms of assembly, the system is composed of three essential subunits: KdpA, KdpB and KdpC.

The protein localises to the cell membrane. Part of the high-affinity ATP-driven potassium transport (or Kdp) system, which catalyzes the hydrolysis of ATP coupled with the electrogenic transport of potassium into the cytoplasm. This subunit binds the extracellular potassium ions and delivers the ions to the membrane domain of KdpB through an intramembrane tunnel. The sequence is that of Potassium-transporting ATPase potassium-binding subunit from Rhodococcus jostii (strain RHA1).